The primary structure comprises 239 residues: Phosphoglycolate phosphatase (239 aa).

Asp9 acts as the Nucleophile in catalysis. The Mg(2+) site is built by Asp9 and Asp11. Lys157 contacts substrate. Positions 180 and 184 each coordinate Mg(2+).

This sequence belongs to the archaeal SPP-like hydrolase family. Requires Mg(2+) as cofactor.

The catalysed reaction is 2-phosphoglycolate + H2O = glycolate + phosphate. Functionally, catalyzes the dephosphorylation of 2-phosphoglycolate. The protein is Phosphoglycolate phosphatase of Thermococcus kodakarensis (strain ATCC BAA-918 / JCM 12380 / KOD1) (Pyrococcus kodakaraensis (strain KOD1)).